The primary structure comprises 468 residues: ATP synthase subunit beta 1 (468 aa).

155–162 (GGAGVGKT) contributes to the ATP binding site.

This sequence belongs to the ATPase alpha/beta chains family. As to quaternary structure, F-type ATPases have 2 components, CF(1) - the catalytic core - and CF(0) - the membrane proton channel. CF(1) has five subunits: alpha(3), beta(3), gamma(1), delta(1), epsilon(1). CF(0) has three main subunits: a(1), b(2) and c(9-12). The alpha and beta chains form an alternating ring which encloses part of the gamma chain. CF(1) is attached to CF(0) by a central stalk formed by the gamma and epsilon chains, while a peripheral stalk is formed by the delta and b chains.

The protein localises to the cell inner membrane. It catalyses the reaction ATP + H2O + 4 H(+)(in) = ADP + phosphate + 5 H(+)(out). Its function is as follows. Produces ATP from ADP in the presence of a proton gradient across the membrane. The catalytic sites are hosted primarily by the beta subunits. The polypeptide is ATP synthase subunit beta 1 (Syntrophotalea carbinolica (strain DSM 2380 / NBRC 103641 / GraBd1) (Pelobacter carbinolicus)).